The sequence spans 489 residues: Rhamnulokinase (489 aa).

Alanine 13–arginine 17 lines the ATP pocket. The cysteines at positions 68 and 222 are disulfide-linked. Residues glycine 83 and histidine 236–threonine 238 each bind substrate. Aspartate 237 (proton acceptor) is an active-site residue. Threonine 259 provides a ligand contact to ATP. Asparagine 296 serves as a coordination point for substrate. Glutamine 304 is an ATP binding site. The cysteines at positions 353 and 370 are disulfide-linked. Residue glycine 402 coordinates ATP. Cysteine 413 and cysteine 417 are joined by a disulfide.

Belongs to the rhamnulokinase family. Mg(2+) serves as cofactor.

It catalyses the reaction L-rhamnulose + ATP = L-rhamnulose 1-phosphate + ADP + H(+). It functions in the pathway carbohydrate degradation; L-rhamnose degradation; glycerone phosphate from L-rhamnose: step 2/3. In terms of biological role, involved in the catabolism of L-rhamnose (6-deoxy-L-mannose). Catalyzes the transfer of the gamma-phosphate group from ATP to the 1-hydroxyl group of L-rhamnulose to yield L-rhamnulose 1-phosphate. In Salmonella paratyphi A (strain AKU_12601), this protein is Rhamnulokinase.